The following is a 305-amino-acid chain: NK1 transcription factor-related protein 2 (305 aa).

Disordered regions lie at residues 51–158 (EEVE…KPRR) and 210–257 (KWKK…PGAL). Acidic residues predominate over residues 87 to 96 (SEAEEEEEAE). Residues 97–115 (DAGRAHQPERWQGVHEGSP) are compositionally biased toward basic and acidic residues. Residues 129 to 140 (AEGLPASPGSPG) are compositionally biased toward low complexity. Residues 156–215 (PRRARTAFTYEQLVALENKFRATRYLSVCERLNLALSLSLTETQVKIWFQNRRTKWKKQN) constitute a DNA-binding region (homeobox).

This sequence belongs to the NK-1 homeobox family. Interacts (via the homeodomain) with HIPK1, HIPK2, and HIPK3. Phosphorylated by HIPK2 in vitro. In terms of tissue distribution, expression detected in the brain, testis and spleen. In the testis, expressed in the germ cells of the seminiferous epithelium, predominantly in elongating spermatids and spermatozoa. Expressed throughout the brain with highest levels in regions of the cerebral cortex, hippocampus, diencephalon, pons, medulla and cerebellum.

It localises to the nucleus. Its subcellular location is the nucleolus. Its function is as follows. Transcriptional repressor. May play a role in early development as a Wnt/beta-catenin effector, hence controlling pluripotency and preimplantation development of embryonic stem cells. May promote adipogenesis in mesenchymal stem cells, possibly by inhibiting the expression of the antiadipogenic factor NR2F2. May inhibit osteoblastogenic differentiation. This Mus musculus (Mouse) protein is NK1 transcription factor-related protein 2 (Nkx1-2).